Reading from the N-terminus, the 245-residue chain is UPF0280 protein UNCMA_16740 (245 aa).

The protein belongs to the UPF0280 family.

The sequence is that of UPF0280 protein UNCMA_16740 from Methanocella arvoryzae (strain DSM 22066 / NBRC 105507 / MRE50).